Here is a 498-residue protein sequence, read N- to C-terminus: Angiopoietin-4 (498 aa).

Residues Met-1 to Ala-22 form the signal peptide. A disordered region spans residues Glu-51–Gly-80. A coiled-coil region spans residues Gln-85–Gln-109. 8 N-linked (GlcNAc...) asparagine glycosylation sites follow: Asn-96, Asn-126, Asn-158, Asn-247, Asn-295, Asn-306, Asn-332, and Asn-424. Positions His-186–Gln-254 form a coiled coil. Residues Arg-277–Gly-497 enclose the Fibrinogen C-terminal domain. The cysteines at positions 286 and 315 are disulfide-linked. The cysteines at positions 439 and 452 are disulfide-linked.

In terms of assembly, homodimer; disulfide-linked. Interacts with TEK/TIE2.

It is found in the secreted. Binds to TEK/TIE2, modulating ANGPT1 signaling. Can induce tyrosine phosphorylation of TEK/TIE2. Promotes endothelial cell survival, migration and angiogenesis. The chain is Angiopoietin-4 (ANGPT4) from Bos taurus (Bovine).